A 200-amino-acid chain; its full sequence is Peptidyl-tRNA hydrolase (200 aa).

Tyr-16 is a tRNA binding site. Catalysis depends on His-21, which acts as the Proton acceptor. TRNA-binding residues include Phe-67, Asn-69, and Asn-115.

This sequence belongs to the PTH family. As to quaternary structure, monomer.

It is found in the cytoplasm. The enzyme catalyses an N-acyl-L-alpha-aminoacyl-tRNA + H2O = an N-acyl-L-amino acid + a tRNA + H(+). Its function is as follows. Hydrolyzes ribosome-free peptidyl-tRNAs (with 1 or more amino acids incorporated), which drop off the ribosome during protein synthesis, or as a result of ribosome stalling. In terms of biological role, catalyzes the release of premature peptidyl moieties from peptidyl-tRNA molecules trapped in stalled 50S ribosomal subunits, and thus maintains levels of free tRNAs and 50S ribosomes. In Prochlorococcus marinus (strain AS9601), this protein is Peptidyl-tRNA hydrolase.